A 765-amino-acid chain; its full sequence is 5-methyltetrahydropteroyltriglutamate--homocysteine methyltransferase 2 (765 aa).

5-methyltetrahydropteroyltri-L-glutamate-binding residues include lysine 18 and asparagine 116. L-homocysteine-binding positions include 437-439 and glutamate 490; that span reads IGS. L-methionine contacts are provided by residues 437–439 and glutamate 490; that span reads IGS. 5-methyltetrahydropteroyltri-L-glutamate contacts are provided by residues aspartate 495, tyrosine 518, 521–522, and tryptophan 567; that span reads RC. Aspartate 605 provides a ligand contact to L-homocysteine. Aspartate 605 provides a ligand contact to L-methionine. Zn(2+) is bound by residues histidine 647, cysteine 649, histidine 658, aspartate 662, and glutamate 671. Residue histidine 701 is the Proton donor of the active site. Residue cysteine 733 coordinates Zn(2+).

The protein belongs to the vitamin-B12 independent methionine synthase family. Zn(2+) is required as a cofactor. Expressed in leaves, stems and siliques.

The protein localises to the cytoplasm. The protein resides in the cytosol. The catalysed reaction is 5-methyltetrahydropteroyltri-L-glutamate + L-homocysteine = tetrahydropteroyltri-L-glutamate + L-methionine. The protein operates within amino-acid biosynthesis; L-methionine biosynthesis via de novo pathway; L-methionine from L-homocysteine (MetE route): step 1/1. Functionally, catalyzes the transfer of a methyl group from 5-methyltetrahydrofolate to homocysteine resulting in methionine formation. The chain is 5-methyltetrahydropteroyltriglutamate--homocysteine methyltransferase 2 (MS2) from Arabidopsis thaliana (Mouse-ear cress).